A 565-amino-acid chain; its full sequence is Thiol:disulfide interchange protein DsbD (565 aa).

An N-terminal signal peptide occupies residues 1-19 (MAQRIFTLILLLCSTSVFA). 2 cysteine pairs are disulfide-bonded: Cys-122/Cys-128 and Cys-182/Cys-304. Transmembrane regions (helical) follow at residues 163-183 (LPFS…TPCV), 208-228 (LLTF…GLVV), 243-263 (YVLI…FGLF), 289-309 (GVFI…TAPL), 323-343 (WLGG…LMLI), 357-377 (WMEQ…VFLL), and 384-404 (IWGL…AFIT). Residues 434–565 (WAFGATHTAQ…FSAHLRDRQP (132 aa)) enclose the Thioredoxin domain. Cys-480 and Cys-483 are oxidised to a cystine.

Belongs to the thioredoxin family. DsbD subfamily.

The protein localises to the cell inner membrane. The catalysed reaction is [protein]-dithiol + NAD(+) = [protein]-disulfide + NADH + H(+). The enzyme catalyses [protein]-dithiol + NADP(+) = [protein]-disulfide + NADPH + H(+). In terms of biological role, required to facilitate the formation of correct disulfide bonds in some periplasmic proteins and for the assembly of the periplasmic c-type cytochromes. Acts by transferring electrons from cytoplasmic thioredoxin to the periplasm. This transfer involves a cascade of disulfide bond formation and reduction steps. The protein is Thiol:disulfide interchange protein DsbD of Escherichia coli O6:H1 (strain CFT073 / ATCC 700928 / UPEC).